A 25-amino-acid polypeptide reads, in one-letter code: Androctonin (25 aa).

2 disulfides stabilise this stretch: C4–C20 and C10–C16.

It localises to the secreted. Functionally, active against both bacteria (Gram-positive and Gram-negative) and filamentous fungi. Acts on the membrane of the bacterial cells. It destabilize a membrane by modifying its properties. In Androctonus australis (Sahara scorpion), this protein is Androctonin.